Consider the following 323-residue polypeptide: tRNA dimethylallyltransferase (323 aa).

12–19 (GPTASGKT) serves as a coordination point for ATP. 14–19 (TASGKT) is a binding site for substrate. 2 interaction with substrate tRNA regions span residues 37-40 (DSAL) and 161-165 (QRLVR).

The protein belongs to the IPP transferase family. In terms of assembly, monomer. Requires Mg(2+) as cofactor.

It catalyses the reaction adenosine(37) in tRNA + dimethylallyl diphosphate = N(6)-dimethylallyladenosine(37) in tRNA + diphosphate. In terms of biological role, catalyzes the transfer of a dimethylallyl group onto the adenine at position 37 in tRNAs that read codons beginning with uridine, leading to the formation of N6-(dimethylallyl)adenosine (i(6)A). The protein is tRNA dimethylallyltransferase of Azotobacter vinelandii (strain DJ / ATCC BAA-1303).